Reading from the N-terminus, the 610-residue chain is Pentatricopeptide repeat-containing protein At3g15590, mitochondrial (610 aa).

The N-terminal 71 residues, 1–71 (MYSLSRILQR…FSRFFGIHKL (71 aa)), are a transit peptide targeting the mitochondrion. Residues 88-142 (EELSESEEAVPVSGDVPEGVVDDDSLFEPELGSDNDDLEIEEKHSKDGGKPTKKR) form a disordered region. Residues 107 to 127 (VVDDDSLFEPELGSDNDDLEI) are compositionally biased toward acidic residues. Positions 128-137 (EEKHSKDGGK) are enriched in basic and acidic residues. PPR repeat units lie at residues 241–275 (GEVV…KFPT), 276–309 (SVFA…NIKP), 310–344 (SRAT…GIEL), 345–379 (DPEL…GLQQ), 380–410 (TPWV…VDQN), 412–442 (RYDN…LVEK), 447–481 (PMMP…GIAI), 482–517 (GPST…KMRP), and 518–552 (MFTT…SYAA).

This sequence belongs to the PPR family. P subfamily.

It localises to the mitochondrion. In Arabidopsis thaliana (Mouse-ear cress), this protein is Pentatricopeptide repeat-containing protein At3g15590, mitochondrial.